A 1209-amino-acid polypeptide reads, in one-letter code: Phospholipid-transporting ATPase ID (1209 aa).

Residues 1 to 12 are compositionally biased toward basic and acidic residues; the sequence is MTVPKEMPEKWA. The disordered stretch occupies residues 1–36; it reads MTVPKEMPEKWARAQAPPSWSRKKPSWGTEEERRAR. Residues 1–64 are Cytoplasmic-facing; the sequence is MTVPKEMPEK…TSKYNILTFL (64 aa). Residues 65 to 86 form a helical membrane-spanning segment; sequence PVNLFEQFQEVANTYFLFLLIL. The Exoplasmic loop portion of the chain corresponds to 87-92; that stretch reads QLIPQI. A helical transmembrane segment spans residues 93–112; it reads SSLSWFTTIVPLVLVLTITA. At 113–295 the chain is on the cytoplasmic side; the sequence is VKDATDDYFR…TSIDRLMNTL (183 aa). The chain crosses the membrane as a helical span at residues 296-317; that stretch reads VLWIFGFLVCMGVILAIGNAIW. The Exoplasmic loop portion of the chain corresponds to 318–346; the sequence is EHEVGMRFQVYLPWDEAVDSAFFSGFLSF. The chain crosses the membrane as a helical span at residues 347-368; sequence WSYIIILNTVVPISLYVSVEVI. Residues 369–889 are Cytoplasmic-facing; that stretch reads RLGHSYFINW…GRWSYLRMCK (521 aa). D411 serves as the catalytic 4-aspartylphosphate intermediate. ATP is bound by residues D411, K412, T413, E515, F556, K579, R613, T693, G694, D695, R807, and K813. Residue D411 participates in Mg(2+) binding. T413 provides a ligand contact to Mg(2+). D833 contributes to the Mg(2+) binding site. Residues N836 and D837 each coordinate ATP. Residue D837 coordinates Mg(2+). A helical transmembrane segment spans residues 890 to 910; sequence FLCYFFYKNFAFTMVHFWFGF. The Exoplasmic loop segment spans residues 911-922; that stretch reads FCGFSAQTVYDQ. A helical membrane pass occupies residues 923–942; sequence YFITLYNIVYTSLPVLAMGV. At 943-972 the chain is on the cytoplasmic side; it reads FDQDVPEQRSMEYPKLYEPGQLNLLFNKRE. The chain crosses the membrane as a helical span at residues 973–994; it reads FFICIAQGIYTSVLMFFIPYGV. Residues 995–1008 are Exoplasmic loop-facing; the sequence is FADATRDDGTQLAD. The chain crosses the membrane as a helical span at residues 1009–1031; the sequence is YQSFAVTVATSLVIVVSVQIGLD. At 1032–1037 the chain is on the cytoplasmic side; that stretch reads TGYWTA. The helical transmembrane segment at 1038 to 1058 threads the bilayer; the sequence is INHFFIWGSLAVYFAILFAMH. Residues 1059 to 1078 lie on the Exoplasmic loop side of the membrane; the sequence is SNGLFDMFPNQFRFVGNAQN. The chain crosses the membrane as a helical span at residues 1079 to 1103; sequence TLAQPTVWLTIVLTTVVCIMPVVAF. At 1104 to 1209 the chain is on the cytoplasmic side; the sequence is RFLRLNLKPD…SGGADKPLKG (106 aa). S1175 carries the phosphoserine modification. The segment at 1181–1209 is disordered; that stretch reads SSSWIESLRRKKSDSASSPSGGADKPLKG. Residues 1195 to 1209 are compositionally biased toward low complexity; that stretch reads SASSPSGGADKPLKG.

Belongs to the cation transport ATPase (P-type) (TC 3.A.3) family. Type IV subfamily. Component of a P4-ATPase flippase complex which consists of a catalytic alpha subunit ATP8B2 and an accessory beta subunit TMEM30A or TMEM30B. It depends on Mg(2+) as a cofactor. As to expression, isoform 3 is ubiquitous, with highest expression in aorta, cerebellum and uterus.

The protein localises to the cell membrane. It is found in the endoplasmic reticulum membrane. The enzyme catalyses ATP + H2O + phospholipidSide 1 = ADP + phosphate + phospholipidSide 2.. It carries out the reaction a 1,2-diacyl-sn-glycero-3-phosphocholine(out) + ATP + H2O = a 1,2-diacyl-sn-glycero-3-phosphocholine(in) + ADP + phosphate + H(+). Its function is as follows. Catalytic component of P4-ATPase flippase complex, which catalyzes the hydrolysis of ATP coupled to the transport of phosphatidylcholine (PC) from the outer to the inner leaflet of the plasma membrane. May contribute to the maintenance of membrane lipid asymmetry. The protein is Phospholipid-transporting ATPase ID of Homo sapiens (Human).